The following is a 225-amino-acid chain: Biosynthetic peptidoglycan transglycosylase (225 aa).

Residues 12–32 traverse the membrane as a helical segment; the sequence is IWFVAWRFLLLFVIVLFLFRF.

Belongs to the glycosyltransferase 51 family.

Its subcellular location is the cell inner membrane. It carries out the reaction [GlcNAc-(1-&gt;4)-Mur2Ac(oyl-L-Ala-gamma-D-Glu-L-Lys-D-Ala-D-Ala)](n)-di-trans,octa-cis-undecaprenyl diphosphate + beta-D-GlcNAc-(1-&gt;4)-Mur2Ac(oyl-L-Ala-gamma-D-Glu-L-Lys-D-Ala-D-Ala)-di-trans,octa-cis-undecaprenyl diphosphate = [GlcNAc-(1-&gt;4)-Mur2Ac(oyl-L-Ala-gamma-D-Glu-L-Lys-D-Ala-D-Ala)](n+1)-di-trans,octa-cis-undecaprenyl diphosphate + di-trans,octa-cis-undecaprenyl diphosphate + H(+). The protein operates within cell wall biogenesis; peptidoglycan biosynthesis. In terms of biological role, peptidoglycan polymerase that catalyzes glycan chain elongation from lipid-linked precursors. This chain is Biosynthetic peptidoglycan transglycosylase, found in Marinomonas sp. (strain MWYL1).